Here is a 475-residue protein sequence, read N- to C-terminus: MGRTLAEKVWDDHVVRRAEGEPDLLFIDLHLLHEVTSPQAFDGLRQAGRPVRRLDLTIATEDHNTPTLDIDKPIADPVSRAQLETLRKNCADFGVRLHPLGDVEQGVVHVVGPQLGLTQPGTTVVCGDSHTSTHGAFGALAFGIGTSQVEHVLATQTLPLARPKTMAITVEGELPDEVTAKDLILAIIARIGTGGGQGYILEYRGSAIEKLSMEARMTICNMSIEAGARAGMIAPDATTFDYLEGRDHAPRGEDWDAAVAYWKTLRSDDDAVFDAEVVIDAAELAPFVTWGTNPGQGAPLSANVPDPASYEDASERFAAEKALEYMGLTAGQALRDINVDTVFVGSCTNGRIEDLRNAAAVLDGRKVADGVRMLIVPGSVRVALQAVAEGLDKVFTEAGAEWRHAGCSMCLGMNPDQLAPGERSASTSNRNFEGRQGKGGRTHLVSPQVAAATAVLGHLASPADLSDTRTPAGVR.

[4Fe-4S] cluster-binding residues include cysteine 347, cysteine 407, and cysteine 410. Residues leucine 418–threonine 442 are disordered.

It belongs to the aconitase/IPM isomerase family. LeuC type 1 subfamily. In terms of assembly, heterodimer of LeuC and LeuD. Requires [4Fe-4S] cluster as cofactor.

It catalyses the reaction (2R,3S)-3-isopropylmalate = (2S)-2-isopropylmalate. The protein operates within amino-acid biosynthesis; L-leucine biosynthesis; L-leucine from 3-methyl-2-oxobutanoate: step 2/4. Its function is as follows. Catalyzes the isomerization between 2-isopropylmalate and 3-isopropylmalate, via the formation of 2-isopropylmaleate. The sequence is that of 3-isopropylmalate dehydratase large subunit from Streptomyces griseus subsp. griseus (strain JCM 4626 / CBS 651.72 / NBRC 13350 / KCC S-0626 / ISP 5235).